Consider the following 347-residue polypeptide: GMP reductase (347 aa).

NADP(+) is bound at residue Ala-108–Ala-131. Residues Gly-181 and Gly-183 each coordinate K(+). The active-site Thioimidate intermediate is Cys-186. NADP(+) is bound at residue Ile-216–Val-239.

The protein belongs to the IMPDH/GMPR family. GuaC type 1 subfamily. As to quaternary structure, homotetramer.

The enzyme catalyses IMP + NH4(+) + NADP(+) = GMP + NADPH + 2 H(+). Functionally, catalyzes the irreversible NADPH-dependent deamination of GMP to IMP. It functions in the conversion of nucleobase, nucleoside and nucleotide derivatives of G to A nucleotides, and in maintaining the intracellular balance of A and G nucleotides. This is GMP reductase from Shigella flexneri.